Here is a 375-residue protein sequence, read N- to C-terminus: Queuine tRNA-ribosyltransferase (375 aa).

The active-site Proton acceptor is the D89. Substrate-binding positions include 89–93 (DSGGF), D143, Q187, and G214. The segment at 245–251 (GVGKPED) is RNA binding. The Nucleophile role is filled by D264. An RNA binding; important for wobble base 34 recognition region spans residues 269 to 273 (TRNAR). The Zn(2+) site is built by C302, C304, C307, and H333.

This sequence belongs to the queuine tRNA-ribosyltransferase family. Homodimer. Within each dimer, one monomer is responsible for RNA recognition and catalysis, while the other monomer binds to the replacement base PreQ1. Zn(2+) is required as a cofactor.

The catalysed reaction is 7-aminomethyl-7-carbaguanine + guanosine(34) in tRNA = 7-aminomethyl-7-carbaguanosine(34) in tRNA + guanine. It participates in tRNA modification; tRNA-queuosine biosynthesis. Its function is as follows. Catalyzes the base-exchange of a guanine (G) residue with the queuine precursor 7-aminomethyl-7-deazaguanine (PreQ1) at position 34 (anticodon wobble position) in tRNAs with GU(N) anticodons (tRNA-Asp, -Asn, -His and -Tyr). Catalysis occurs through a double-displacement mechanism. The nucleophile active site attacks the C1' of nucleotide 34 to detach the guanine base from the RNA, forming a covalent enzyme-RNA intermediate. The proton acceptor active site deprotonates the incoming PreQ1, allowing a nucleophilic attack on the C1' of the ribose to form the product. After dissociation, two additional enzymatic reactions on the tRNA convert PreQ1 to queuine (Q), resulting in the hypermodified nucleoside queuosine (7-(((4,5-cis-dihydroxy-2-cyclopenten-1-yl)amino)methyl)-7-deazaguanosine). The polypeptide is Queuine tRNA-ribosyltransferase (Photobacterium profundum (strain SS9)).